The chain runs to 70 residues: Large ribosomal subunit protein bL28 (70 aa).

The protein belongs to the bacterial ribosomal protein bL28 family.

This chain is Large ribosomal subunit protein bL28, found in Maridesulfovibrio salexigens (strain ATCC 14822 / DSM 2638 / NCIMB 8403 / VKM B-1763) (Desulfovibrio salexigens).